The chain runs to 386 residues: Lipid-A-disaccharide synthase (386 aa).

It belongs to the LpxB family.

It carries out the reaction a lipid X + a UDP-2-N,3-O-bis[(3R)-3-hydroxyacyl]-alpha-D-glucosamine = a lipid A disaccharide + UDP + H(+). It participates in bacterial outer membrane biogenesis; LPS lipid A biosynthesis. Condensation of UDP-2,3-diacylglucosamine and 2,3-diacylglucosamine-1-phosphate to form lipid A disaccharide, a precursor of lipid A, a phosphorylated glycolipid that anchors the lipopolysaccharide to the outer membrane of the cell. The chain is Lipid-A-disaccharide synthase from Chromohalobacter salexigens (strain ATCC BAA-138 / DSM 3043 / CIP 106854 / NCIMB 13768 / 1H11).